A 206-amino-acid polypeptide reads, in one-letter code: Probable GTP-binding protein EngB (206 aa).

The 180-residue stretch at 23-202 folds into the EngB-type G domain; the sequence is HTAEVAFVGR…WGALLDTFGK (180 aa). Residues 31 to 38, 58 to 62, 83 to 86, 150 to 153, and 181 to 183 contribute to the GTP site; these read GRSNVGKS, GRTRT, DLPG, TKVD, and FSS. Mg(2+)-binding residues include Ser-38 and Thr-60.

The protein belongs to the TRAFAC class TrmE-Era-EngA-EngB-Septin-like GTPase superfamily. EngB GTPase family. The cofactor is Mg(2+).

Necessary for normal cell division and for the maintenance of normal septation. In Myxococcus xanthus (strain DK1622), this protein is Probable GTP-binding protein EngB.